A 48-amino-acid chain; its full sequence is Sperm protamine P1 (48 aa).

It belongs to the protamine P1 family. As to expression, testis.

The protein localises to the nucleus. It is found in the chromosome. Protamines substitute for histones in the chromatin of sperm during the haploid phase of spermatogenesis. They compact sperm DNA into a highly condensed, stable and inactive complex. The protein is Sperm protamine P1 (PRM1) of Corynorhinus townsendii (Townsend's big-eared bat).